The primary structure comprises 1396 residues: DNA-directed RNA polymerase subunit beta' (1396 aa).

4 residues coordinate Zn(2+): C72, C74, C87, and C90. D463, D465, and D467 together coordinate Mg(2+). Positions 814, 889, 896, and 899 each coordinate Zn(2+).

Belongs to the RNA polymerase beta' chain family. In terms of assembly, the RNAP catalytic core consists of 2 alpha, 1 beta, 1 beta' and 1 omega subunit. When a sigma factor is associated with the core the holoenzyme is formed, which can initiate transcription. The cofactor is Mg(2+). Zn(2+) is required as a cofactor.

The catalysed reaction is RNA(n) + a ribonucleoside 5'-triphosphate = RNA(n+1) + diphosphate. DNA-dependent RNA polymerase catalyzes the transcription of DNA into RNA using the four ribonucleoside triphosphates as substrates. In Chlamydia muridarum (strain MoPn / Nigg), this protein is DNA-directed RNA polymerase subunit beta'.